A 375-amino-acid chain; its full sequence is Chaperone protein DnaJ (375 aa).

One can recognise a J domain in the interval 5–70 (DFYEVLGVEK…QKRAQYDQFG (66 aa)). The CR-type zinc finger occupies 134–216 (GVEKEVSITK…CKGKGTVRKQ (83 aa)). 8 residues coordinate Zn(2+): C147, C150, C164, C167, C190, C193, C204, and C207. CXXCXGXG motif repeat units lie at residues 147 to 154 (CETCTGTG), 164 to 171 (CPKCNGSG), 190 to 197 (CDMCGGKG), and 204 to 211 (CSDCKGKG).

It belongs to the DnaJ family. In terms of assembly, homodimer. Requires Zn(2+) as cofactor.

It localises to the cytoplasm. Its function is as follows. Participates actively in the response to hyperosmotic and heat shock by preventing the aggregation of stress-denatured proteins and by disaggregating proteins, also in an autonomous, DnaK-independent fashion. Unfolded proteins bind initially to DnaJ; upon interaction with the DnaJ-bound protein, DnaK hydrolyzes its bound ATP, resulting in the formation of a stable complex. GrpE releases ADP from DnaK; ATP binding to DnaK triggers the release of the substrate protein, thus completing the reaction cycle. Several rounds of ATP-dependent interactions between DnaJ, DnaK and GrpE are required for fully efficient folding. Also involved, together with DnaK and GrpE, in the DNA replication of plasmids through activation of initiation proteins. The sequence is that of Chaperone protein DnaJ from Clostridium tetani (strain Massachusetts / E88).